The primary structure comprises 517 residues: MLPVSNPSSPEHLLKKSRTPDSTTSIDRKNSFNSLHSVGNRSSYIAASRSHCTWLILSLLSLQLILFLTLRSIPFPHRHIPENFPSPAAVVTTTVTTTVISAASSNPPLSSSSSDERCDSGRVFVYDMPKIFNEVILQQCDNLNPWSSRCDALSNDGFGQEATSLSNVIPKDLVQSWFWTDQFVTEIIFHNRILNHRCRTLDPESATAFYIPFYAGLAVGQYLWSNYAAADRDRHCKMMTQWVKNQPYWNRSNGWDHFITMGRITWDFRRSKDEDWGSNCIYIPGMRNITRLLIERNSWDHFDVGVPYPTGFHPRSDSDVVNWQDFVRNRRRETLFCFAGAPRAGIVNDFRGLLLRHCEESRGKCRTVDCTVGKCSNGSSAILETFLGSDFCLQPRGDSFTRRSIFDCMLAGSIPVFFWRRSAYMQYQWFLPDKPDSYSVFIDRNEVTNGTTSIKEVLERYSKEDVRKMRERVIDLIPNLVYAKSPNGLETFKDAFDVAIDGVFRRFKEQEKWYKWR.

The segment at M1–S31 is disordered. At M1–R49 the chain is on the cytoplasmic side. Residues P20–S31 are compositionally biased toward polar residues. Residues S50–L70 form a helical; Signal-anchor for type II membrane protein membrane-spanning segment. Topologically, residues R71–R517 are lumenal. N-linked (GlcNAc...) asparagine glycans are attached at residues N250, N288, N377, and N449.

It belongs to the glycosyltransferase 47 family. As to quaternary structure, interacts with CSLC4, FUT1, XXT2 and XXT5. As to expression, expressed in roots, hypocotyls, cotyledons, leaves, stems and flowers.

It localises to the golgi apparatus membrane. Functions in xyloglucan synthesis by adding side chains to the xylosylated glucan backbone. Involved in galactosylating hemicellulose xyloglucan (XyG) at the second position of the XXXG motif to form XLXG. Associates with other xyloglucan-synthesizing enzymes to form multiprotein complexes for xyloglucan synthesis in the Golgi. This Arabidopsis thaliana (Mouse-ear cress) protein is Xyloglucan galactosyltransferase XLT2.